The primary structure comprises 387 residues: MKDVVIVDCIRTPMGRSKGGAFRNVRAEDLSAHLMSSILLRNPNLDPNEIEDIYWGCVQQTLEQGFNIARNAALLAGIPKQVGAVTVNRLCGSSMQALHDASRAIQVGDGDIFIIGGVEHMGHVPMSHGVDFHPGMAKSVAKASGMMGLTAEMLGKLHGISRQQQDEFAARSHRRAYAATVEGRFAREIVGLEGHDASGARFFYDYDEVIRPETTVETLSQLRPVFDPVNGTVTAGTSSALSDGASAMLVMSADRAKALGLTPRVRVRSMAVAGCDAAIMGYGPVPATQKALKRAGLTIGDIDLVELNEAFAAQSLPCVKDLGLLDVAEEKVNLNGGAIALGHPLGCSGSRISTTLIHLMEEKDANLGLATMCIGLGQGIATVFERV.

Cysteine 91 functions as the Acyl-thioester intermediate in the catalytic mechanism. Residues histidine 343 and cysteine 373 each act as proton acceptor in the active site.

Belongs to the thiolase-like superfamily. Thiolase family. In terms of assembly, heterotetramer of two alpha chains (FadB) and two beta chains (FadA).

It is found in the cytoplasm. The catalysed reaction is an acyl-CoA + acetyl-CoA = a 3-oxoacyl-CoA + CoA. Its pathway is lipid metabolism; fatty acid beta-oxidation. Catalyzes the final step of fatty acid oxidation in which acetyl-CoA is released and the CoA ester of a fatty acid two carbons shorter is formed. The polypeptide is 3-ketoacyl-CoA thiolase (Aeromonas salmonicida (strain A449)).